The chain runs to 391 residues: Stearoyl-[acyl-carrier-protein] 9-desaturase 5, chloroplastic (391 aa).

A disordered region spans residues 1–20 (MAFAPSHTASPSYCGVAQGG). A chloroplast-targeting transit peptide spans 1 to 32 (MAFAPSHTASPSYCGVAQGGRRSNGMSPVVAM). Fe cation contacts are provided by Glu-133, Glu-171, His-174, Glu-224, Glu-257, and His-260.

It belongs to the fatty acid desaturase type 2 family. As to quaternary structure, homodimer. Requires Fe(2+) as cofactor.

It localises to the plastid. Its subcellular location is the chloroplast. The enzyme catalyses octadecanoyl-[ACP] + 2 reduced [2Fe-2S]-[ferredoxin] + O2 + 2 H(+) = (9Z)-octadecenoyl-[ACP] + 2 oxidized [2Fe-2S]-[ferredoxin] + 2 H2O. It functions in the pathway lipid metabolism; fatty acid metabolism. Converts stearoyl-ACP to oleoyl-ACP by introduction of a cis double bond between carbons 9 and 10 of the acyl chain. This Oryza sativa subsp. indica (Rice) protein is Stearoyl-[acyl-carrier-protein] 9-desaturase 5, chloroplastic.